The following is a 365-amino-acid chain: Cobalt-precorrin-5B C(1)-methyltransferase (365 aa).

Belongs to the CbiD family.

The catalysed reaction is Co-precorrin-5B + S-adenosyl-L-methionine = Co-precorrin-6A + S-adenosyl-L-homocysteine. The protein operates within cofactor biosynthesis; adenosylcobalamin biosynthesis; cob(II)yrinate a,c-diamide from sirohydrochlorin (anaerobic route): step 6/10. Functionally, catalyzes the methylation of C-1 in cobalt-precorrin-5B to form cobalt-precorrin-6A. This is Cobalt-precorrin-5B C(1)-methyltransferase from Methanococcus maripaludis (strain DSM 14266 / JCM 13030 / NBRC 101832 / S2 / LL).